The sequence spans 293 residues: MRFSLALAAAGLAQTAFAAPQPSRGFGCGAPEPSEELLQVSQQFAVEEAQALAESYRSGNLTARDVTAQAISVKVYIHVVAASTALSGGYLTDTMINNQFSVLQSAFAPYGISFTLAGTDKTVNANWADDSKGYEMTMKRALRKGTYKDLNLYFLQKMGGNLGYCYFPTTASPGSTAYIRDGCTILYSTTPGGSSTNYNLGHTATHEVGHWFGLYHTFQGGCTGAGDSVSDTPAQASASSGCPVGRDSCPSQAGVDPIHNYMDYSIDSCYEEFTPGQQTRINSFWTSYRQNAS.

The first 18 residues, 1 to 18, serve as a signal peptide directing secretion; it reads MRFSLALAAAGLAQTAFA. N-linked (GlcNAc...) asparagine glycosylation occurs at Asn60. Residue His206 participates in Zn(2+) binding. Glu207 is an active-site residue. His210 provides a ligand contact to Zn(2+). Cys242 and Cys269 are joined by a disulfide.

This sequence belongs to the peptidase M43B family.

The protein localises to the secreted. Functionally, secreted metalloproteinase that allows assimilation of proteinaceous substrates. This chain is Extracellular metalloprotease PODANS_2_14170, found in Podospora anserina (strain S / ATCC MYA-4624 / DSM 980 / FGSC 10383) (Pleurage anserina).